The chain runs to 211 residues: Ion-translocating oxidoreductase complex subunit G (211 aa).

A helical transmembrane segment spans residues 9–29 (GLTLAIFACATTGLVAMTQYL). Position 175 is an FMN phosphoryl threonine (Thr-175).

It belongs to the RnfG family. As to quaternary structure, the complex is composed of six subunits: RnfA, RnfB, RnfC, RnfD, RnfE and RnfG. Requires FMN as cofactor.

The protein resides in the cell inner membrane. Functionally, part of a membrane-bound complex that couples electron transfer with translocation of ions across the membrane. This chain is Ion-translocating oxidoreductase complex subunit G, found in Vibrio vulnificus (strain YJ016).